The chain runs to 565 residues: Putative pentatricopeptide repeat-containing protein At3g05240 (565 aa).

PPR repeat units follow at residues 37-70 (NVIPLSRLIDFCTTCPETMNLSYARSVFESIDCP), 71-105 (SVYIWNSMIRGYSNSPNPDKALIFYQEMLRKGYSP), 106-140 (DYFTFPYVLKACSGLRDIQFGSCVHGFVVKTGFEV), 141-171 (NMYVSTCLLHMYMCCGEVNYGLRVFEDIPQW), 172-206 (NVVAWGSLISGFVNNNRFSDAIEAFREMQSNGVKA), 207-241 (NETIMVDLLVACGRCKDIVTGKWFHGFLQGLGFDP), 250-280 (NVILATSLIDMYAKCGDLRTARYLFDGMPER), 281-315 (TLVSWNSIITGYSQNGDAEEALCMFLDMLDLGIAP), 316-350 (DKVTFLSVIRASMIQGCSQLGQSIHAYVSKTGFVK), 351-381 (DAAIVCALVNMYAKTGDAESAKKAFEDLEKK), 382-416 (DTIAWTVVIIGLASHGHGNEALSIFQRMQEKGNAT), 418-448 (DGITYLGVLYACSHIGLVEEGQRYFAEMRDL), and 454-484 (TVEHYGCMVDILSRAGRFEEAERLVKTMPVK). Residues 489 to 564 (IWGALLNGCD…VLGHSSVETM (76 aa)) are type E motif.

This sequence belongs to the PPR family. PCMP-E subfamily.

The protein is Putative pentatricopeptide repeat-containing protein At3g05240 (PCMP-E82) of Arabidopsis thaliana (Mouse-ear cress).